Consider the following 1387-residue polypeptide: Magnesium-chelatase subunit ChlH, chloroplastic (1387 aa).

The transit peptide at 1-50 directs the protein to the chloroplast; it reads MSSLVSTPFTTATGVQKKLGAPVPLHSFLLSRRQPAAGAGRGRAAAAAIR.

Belongs to the Mg-chelatase subunit H family. In terms of assembly, the magnesium chelatase complex is a heterotrimer consisting of subunits CHLI, CHLD and CHLH.

The protein resides in the plastid. It is found in the chloroplast stroma. Its subcellular location is the chloroplast membrane. The catalysed reaction is protoporphyrin IX + Mg(2+) + ATP + H2O = Mg-protoporphyrin IX + ADP + phosphate + 3 H(+). Its pathway is porphyrin-containing compound metabolism; chlorophyll biosynthesis. In terms of biological role, involved in chlorophyll biosynthesis. Catalyzes the insertion of magnesium ion into protoporphyrin IX to yield Mg-protoporphyrin IX. The reaction takes place in two steps, with an ATP-dependent activation followed by an ATP-dependent chelation step. May be involved in the plastid-to-nucleus retrograde signaling. The chain is Magnesium-chelatase subunit ChlH, chloroplastic (CHLH) from Oryza sativa subsp. indica (Rice).